Reading from the N-terminus, the 150-residue chain is Large ribosomal subunit protein bL9 (150 aa).

The protein belongs to the bacterial ribosomal protein bL9 family.

Binds to the 23S rRNA. This chain is Large ribosomal subunit protein bL9, found in Buchnera aphidicola subsp. Acyrthosiphon pisum (strain 5A).